Consider the following 183-residue polypeptide: Ubiquitin-conjugating enzyme E2-21 kDa (183 aa).

The UBC core domain maps to 17 to 179 (TCMSRIVKEY…VKYFLAERER (163 aa)). Catalysis depends on C115, which acts as the Glycyl thioester intermediate.

The protein belongs to the ubiquitin-conjugating enzyme family.

Its subcellular location is the peroxisome. It catalyses the reaction S-ubiquitinyl-[E1 ubiquitin-activating enzyme]-L-cysteine + [E2 ubiquitin-conjugating enzyme]-L-cysteine = [E1 ubiquitin-activating enzyme]-L-cysteine + S-ubiquitinyl-[E2 ubiquitin-conjugating enzyme]-L-cysteine.. Its pathway is protein modification; protein ubiquitination. Its function is as follows. Catalyzes the covalent attachment of ubiquitin to other proteins. Essential for peroxisome biogenesis. Required for UBC4-independent ubiquitination of PEX5. The polypeptide is Ubiquitin-conjugating enzyme E2-21 kDa (PEX4) (Saccharomyces cerevisiae (strain ATCC 204508 / S288c) (Baker's yeast)).